The following is a 193-amino-acid chain: Ion-translocating oxidoreductase complex subunit A (193 aa).

The next 6 helical transmembrane spans lie at 5-25, 47-67, 72-92, 102-122, 134-154, and 167-187; these read ILFF…FLGL, FVIL…LLPL, LRII…EIVL, LLGI…IPLF, IFYG…FSCI, and FQGA…FMGF.

The protein belongs to the NqrDE/RnfAE family. In terms of assembly, the complex is composed of six subunits: RnfA, RnfB, RnfC, RnfD, RnfE and RnfG.

It is found in the cell inner membrane. Functionally, part of a membrane-bound complex that couples electron transfer with translocation of ions across the membrane. In Buchnera aphidicola subsp. Acyrthosiphon pisum (strain APS) (Acyrthosiphon pisum symbiotic bacterium), this protein is Ion-translocating oxidoreductase complex subunit A.